A 306-amino-acid chain; its full sequence is MWFKNLLIYRLTQDVPFDAEALETALATKPARACASQEVATYGFVAPFGKGEDAPLVHISQDFLLIAARKEERILPGSVVRDALKEKVDEIEAEQMRKVYKKERDQLKDEIIQAFLPRAFIRRSATFAAIAPRQGLILVNASSPKRAEDLLSTLREVIGSLPVRPLTVKVSPSATMTDWVKTQKAADNFFVLDECELRDTHEDGGIVRCKRQDLTSDEIQLHLNTGKVVTQLSLAWQDKLSFVLDDKMVVKRLKFEDLLQDQAEQDGGEEALGQLDASFTLMMLTFGEFLPELFEALGGEEIPQGI.

It belongs to the RdgC family.

Its subcellular location is the cytoplasm. The protein resides in the nucleoid. May be involved in recombination. This is Recombination-associated protein RdgC from Pseudomonas syringae pv. tomato (strain ATCC BAA-871 / DC3000).